The sequence spans 716 residues: DNA replication licensing factor MCM7 (716 aa).

The C4-type zinc-finger motif lies at 178–205 (CEDCGHEIYQEVTSRVFMPLFKCPSSRC). Positions 326 to 531 (IYNKLSRSLA…MDSDLELAKH (206 aa)) constitute an MCM domain. An ATP-binding site is contributed by 376–383 (GDPGVAKS). The Arginine finger signature appears at 508 to 511 (SRFD).

It belongs to the MCM family. Component of the minichromosome maintenance (MCM) complex, a heterotetramer composed of MCM2, MCM3, MCM4, MCM5, MCM6 and MCM7. Interacts with ETG1. Expressed in shoot apex and flower buds.

Its subcellular location is the nucleus. The protein resides in the cytoplasm. The catalysed reaction is ATP + H2O = ADP + phosphate + H(+). Its function is as follows. Probable component of the MCM2-7 complex (MCM complex) that may function as a DNA helicase and which is essential to undergo a single round of replication initiation and elongation per cell cycle in eukaryotic cells. Required for megagametophyte and embryo development. The chain is DNA replication licensing factor MCM7 (MCM7) from Arabidopsis thaliana (Mouse-ear cress).